A 194-amino-acid chain; its full sequence is uncharacterized protein (194 aa).

The disordered stretch occupies residues 62-93 (GGAGRRTSKAQRVHPQPSHQRQPPPPQHPGPY).

Expressed most abundantly in the brain at protein level. Present in cortex, cerebellum and midbrain. Found in neurons. Elevated expressions detected in Alzheimer brain samples. Also expressed in testis.

The protein localises to the cytoplasm. This is an uncharacterized protein from Homo sapiens (Human).